The chain runs to 131 residues: Meiotically up-regulated gene 115 protein (131 aa).

The protein resides in the mitochondrion. It is found in the nucleus. In terms of biological role, has a role in meiosis. In Schizosaccharomyces pombe (strain 972 / ATCC 24843) (Fission yeast), this protein is Meiotically up-regulated gene 115 protein (mug115).